A 187-amino-acid polypeptide reads, in one-letter code: Elongation factor P (187 aa).

It belongs to the elongation factor P family.

Its subcellular location is the cytoplasm. It functions in the pathway protein biosynthesis; polypeptide chain elongation. Its function is as follows. Involved in peptide bond synthesis. Stimulates efficient translation and peptide-bond synthesis on native or reconstituted 70S ribosomes in vitro. Probably functions indirectly by altering the affinity of the ribosome for aminoacyl-tRNA, thus increasing their reactivity as acceptors for peptidyl transferase. This chain is Elongation factor P, found in Treponema denticola (strain ATCC 35405 / DSM 14222 / CIP 103919 / JCM 8153 / KCTC 15104).